The sequence spans 140 residues: Methylglyoxal synthase (140 aa).

In terms of domain architecture, MGS-like spans methionine 1–leucine 140. Residues histidine 8, lysine 12, threonine 34–threonine 37, and serine 54–glycine 55 each bind substrate. The active-site Proton donor/acceptor is the aspartate 60. Histidine 87 serves as a coordination point for substrate.

Belongs to the methylglyoxal synthase family.

The catalysed reaction is dihydroxyacetone phosphate = methylglyoxal + phosphate. In terms of biological role, catalyzes the formation of methylglyoxal from dihydroxyacetone phosphate. The chain is Methylglyoxal synthase from Geobacillus sp. (strain WCH70).